We begin with the raw amino-acid sequence, 292 residues long: 4-hydroxy-tetrahydrodipicolinate synthase (292 aa).

Residue T45 participates in pyruvate binding. Y133 (proton donor/acceptor) is an active-site residue. K161 acts as the Schiff-base intermediate with substrate in catalysis. A pyruvate-binding site is contributed by I203.

This sequence belongs to the DapA family. As to quaternary structure, homotetramer; dimer of dimers.

It localises to the cytoplasm. The catalysed reaction is L-aspartate 4-semialdehyde + pyruvate = (2S,4S)-4-hydroxy-2,3,4,5-tetrahydrodipicolinate + H2O + H(+). Its pathway is amino-acid biosynthesis; L-lysine biosynthesis via DAP pathway; (S)-tetrahydrodipicolinate from L-aspartate: step 3/4. In terms of biological role, catalyzes the condensation of (S)-aspartate-beta-semialdehyde [(S)-ASA] and pyruvate to 4-hydroxy-tetrahydrodipicolinate (HTPA). This chain is 4-hydroxy-tetrahydrodipicolinate synthase, found in Vibrio vulnificus (strain YJ016).